We begin with the raw amino-acid sequence, 225 residues long: Ribonuclease 3 (225 aa).

The region spanning 5–127 is the RNase III domain; the sequence is IDKLERKLGY…IIGAIYLDSD (123 aa). E40 is a Mg(2+) binding site. D44 is an active-site residue. D113 and E116 together coordinate Mg(2+). The active site involves E116. Residues 154–224 form the DRBM domain; the sequence is DPKTRLQEFL…AETALEQLTN (71 aa).

It belongs to the ribonuclease III family. In terms of assembly, homodimer. Mg(2+) is required as a cofactor.

The protein resides in the cytoplasm. It catalyses the reaction Endonucleolytic cleavage to 5'-phosphomonoester.. Its function is as follows. Digests double-stranded RNA. Involved in the processing of primary rRNA transcript to yield the immediate precursors to the large and small rRNAs (23S and 16S). Processes some mRNAs, and tRNAs when they are encoded in the rRNA operon. Processes pre-crRNA and tracrRNA of type II CRISPR loci if present in the organism. This chain is Ribonuclease 3, found in Vibrio campbellii (strain ATCC BAA-1116).